A 251-amino-acid polypeptide reads, in one-letter code: Triosephosphate isomerase (251 aa).

9–11 is a binding site for substrate; sequence NWK. Catalysis depends on His-95, which acts as the Electrophile. The active-site Proton acceptor is the Glu-167. Substrate-binding positions include Gly-173, Ser-212, and 233-234; that span reads GG.

The protein belongs to the triosephosphate isomerase family. In terms of assembly, homodimer.

The protein localises to the cytoplasm. The enzyme catalyses D-glyceraldehyde 3-phosphate = dihydroxyacetone phosphate. The protein operates within carbohydrate biosynthesis; gluconeogenesis. It participates in carbohydrate degradation; glycolysis; D-glyceraldehyde 3-phosphate from glycerone phosphate: step 1/1. Functionally, involved in the gluconeogenesis. Catalyzes stereospecifically the conversion of dihydroxyacetone phosphate (DHAP) to D-glyceraldehyde-3-phosphate (G3P). This chain is Triosephosphate isomerase, found in Pseudomonas syringae pv. tomato (strain ATCC BAA-871 / DC3000).